The following is a 213-amino-acid chain: Na(+)-translocating NADH-quinone reductase subunit D (213 aa).

Helical transmembrane passes span 22–42 (LIAILGICSALAVTTTVTTAL), 43–63 (TMGFAVSFVTGCSSFVVSLLR), 77–97 (IIISLFVILIDQFLKAFFFTI), 101–121 (LSVFVGLIITNCIVMGRAESM), 131–151 (FLDGLGSGLGYGWVLVCISII), and 183–203 (LGLMVLAPSAFFLLGIMIWIV).

The protein belongs to the NqrDE/RnfAE family. Composed of six subunits; NqrA, NqrB, NqrC, NqrD, NqrE and NqrF.

It is found in the cell inner membrane. The enzyme catalyses a ubiquinone + n Na(+)(in) + NADH + H(+) = a ubiquinol + n Na(+)(out) + NAD(+). In terms of biological role, NQR complex catalyzes the reduction of ubiquinone-1 to ubiquinol by two successive reactions, coupled with the transport of Na(+) ions from the cytoplasm to the periplasm. NqrA to NqrE are probably involved in the second step, the conversion of ubisemiquinone to ubiquinol. The polypeptide is Na(+)-translocating NADH-quinone reductase subunit D (Chlamydia trachomatis serovar L2 (strain ATCC VR-902B / DSM 19102 / 434/Bu)).